Reading from the N-terminus, the 152-residue chain is Type-1 angiotensin II receptor-associated protein (152 aa).

Topologically, residues 1–23 (MELPAVNLKVILLGHWLLTTWGC) are extracellular. The helical transmembrane segment at 24-44 (IVFSGSYAWANFTILALGVWA) threads the bilayer. Over 45-55 (VAQRDSIDAIS) the chain is Cytoplasmic. The chain crosses the membrane as a helical span at residues 56–76 (MFLGGLLATIFLDIVHISIFY). Over 77–86 (PRAGLTDTGR) the chain is Extracellular. The helical transmembrane segment at 87–107 (FGAGMAILSLLLKPLSCCFVY) threads the bilayer. Residues 108 to 152 (HMYRQRGGFLGSSQDRSAYQTIDSAEAPANAFAVPEGRGQDARGY) are Cytoplasmic-facing. 2 positions are modified to phosphoserine: Ser119 and Ser120. Residue Thr128 is modified to Phosphothreonine. Ser131 is subject to Phosphoserine.

As to quaternary structure, interacts with RACK1, and with the carboxy-terminal region of AGTR1.

Its subcellular location is the endoplasmic reticulum membrane. The protein resides in the golgi apparatus membrane. It is found in the cytoplasmic vesicle membrane. In terms of biological role, appears to be a negative regulator of type-1 angiotensin II receptor-mediated signaling by regulating receptor internalization as well as mechanism of receptor desensitization such as phosphorylation. Also induces a decrease in cell proliferation and angiotensin II-stimulated transcriptional activity. The protein is Type-1 angiotensin II receptor-associated protein (AGTRAP) of Pongo abelii (Sumatran orangutan).